Here is a 427-residue protein sequence, read N- to C-terminus: Actin-related protein 3 (427 aa).

It belongs to the actin family. ARP3 subfamily. As to quaternary structure, component of the Arp2/3 complex composed of arp2, act2, arc1/p41-ARC, arc2/p34-ARC, arc3/p21-ARC, arc4/p20-ARC and arc5/p16-ARC.

It is found in the cytoplasm. The protein resides in the cytoskeleton. Its subcellular location is the actin patch. Its function is as follows. Functions as ATP-binding component of the Arp2/3 complex which is involved in regulation of actin polymerization and together with an activating nucleation-promoting factor (NPF) mediates the formation of branched actin networks. Seems to contact the pointed end of the daughter actin filament. May be involved in cytokinesis. The protein is Actin-related protein 3 (act2) of Schizosaccharomyces pombe (strain 972 / ATCC 24843) (Fission yeast).